A 118-amino-acid chain; its full sequence is D-dopachrome decarboxylase (118 aa).

N-acetylproline is present on proline 2. N6-acetyllysine is present on lysine 33. Residue serine 90 is modified to Phosphoserine.

The protein belongs to the MIF family. In terms of assembly, homotrimer.

Its subcellular location is the cytoplasm. It carries out the reaction D-dopachrome + H(+) = 5,6-dihydroxyindole + CO2. In terms of biological role, tautomerization of D-dopachrome with decarboxylation to give 5,6-dihydroxyindole (DHI). The protein is D-dopachrome decarboxylase (Ddt) of Mus musculus (Mouse).